We begin with the raw amino-acid sequence, 1012 residues long: Ankyrin repeat- and BTB/POZ domain-containing protein 3-B (1012 aa).

A helical membrane pass occupies residues 160-180 (ILSWTISVNCIAASLSALSMY). 3 ANK repeats span residues 511–540 (QGMTPLMYACVRGDEAMVQMLLDAGADINS), 557–586 (RQATPLTFAVLHQHIPVVQLLLDAGANVEG), and 595–624 (YTETPLQLASAAGNFELVSLLLERGADPMI). Positions 831–897 (SDVTFLVEGK…LYCGGTDALH (67 aa)) constitute a BTB domain.

It is found in the membrane. In Danio rerio (Zebrafish), this protein is Ankyrin repeat- and BTB/POZ domain-containing protein 3-B (abtb3b).